We begin with the raw amino-acid sequence, 3242 residues long: tRNA nuclease CdiA (3242 aa).

An N-terminal signal peptide occupies residues 1 to 32; that stretch reads MHQPPVRFTYRLLSYLISTIIAGQPLLPAVGA. The segment at 36–322 is two-partner system transport domain (TPS); it reads PQNGAGMDKA…AGGNLSVTGT (287 aa). Residues 351–1376 are FHA-1; the sequence is GELTAGQNAM…IVVRTGHLLN (1026 aa). The receptor-binding domain (RBD) stretch occupies residues 1377 to 1668; the sequence is QREGFSATTT…TGQTGISDDW (292 aa). The YP domain stretch occupies residues 1668–1852; it reads WPLPSGNNGY…LSPEDITLHN (185 aa). The periplasmic FHA-1 repeat (pFR) stretch occupies residues 1853–1913; sequence GSVISGNNVQ…DLSAIGDISN (61 aa). The segment at 2021-2631 is FHA-2; sequence DNSASSTTSQ…TSKYDSKQTS (611 aa). Positions 2075–2091 are enriched in basic and acidic residues; that stretch reads RESKNSRNGRSESHESH. Disordered stretches follow at residues 2075–2094, 2310–2333, and 2439–2481; these read RESKNSRNGRSESHESHAAV, GSSKTTHDRREAGTTQSQSASTIG, and TMAS…NAGN. Over residues 2322–2333 the composition is skewed to polar residues; the sequence is GTTQSQSASTIG. Residues 2969–3242 form a DUF638-CT domain; not toxic when added to the outside of E.coli, does not interfere with F-pilus mediated conjugation, toxic when expressed intracellularly region; sequence GVDPSKLTED…IESALKGYGI (274 aa). Residues 2972–3015 are pre-toxin (PT) domain; sequence PSKLTEDQKQTVSTLATLSAGMAGGIASGDVAGAAAGAGAGKNV. The VENN CT cleavage motif signature appears at 3016 to 3019; the sequence is VENN. A toxin import domain; sufficient to import the tRNA nuclease domain of colicin E5 into E.coli, may bind F-pili region spans residues 3016–3097; that stretch reads VENNALSLVA…KYLSSLHDKY (82 aa). The tract at residues 3016 to 3242 is CT domain; toxic when added to the outside of E.coli and when expressed intracellularly; the sequence is VENNALSLVA…IESALKGYGI (227 aa). Positions 3020–3141 are inner membrane translocation domain (IMTD), targets protein to FtsH; that stretch reads ALSLVARGCA…SENDPKQQNE (122 aa). The tract at residues 3020-3242 is C-terminal effector domain (CT); sequence ALSLVARGCA…IESALKGYGI (223 aa). The interval 3098-3242 is tRNase function, does not interfere with F-pilus mediated conjugation; the sequence is GSGAASNPNI…IESALKGYGI (145 aa). The interval 3116-3146 is disordered; the sequence is KVELGGSGSGTGTPPPSENDPKQQNEKTVDK. Positions 3134–3146 are enriched in basic and acidic residues; it reads NDPKQQNEKTVDK. Residues 3137–3238 are a coiled coil; it reads KQQNEKTVDK…AINKIESALK (102 aa). Catalysis depends on residues Asp3170, His3193, and Glu3196.

The protein in the N-terminal section; belongs to the CdiA toxin family. As to quaternary structure, the C-terminal (CT) domain interacts with cognate CdiI but not non-cognate CdiI from D.dadantii strain 3937. CdiA-CT also interacts with CysK; this is blocked upon preincubation with O-acetyl-L-serine. CysK forms a complex with CdiA-CT/CdiI. One CdiA toxin subunit binds to each subunit of the CysK homodimer, and one CdiI immunity protein binds to each toxin subunit; the immune complex is thus a dimer of trimers. The 4 C-terminal residues of CdiA fit into the active site of CysK. The cofactor is a divalent metal cation.

It is found in the secreted. It localises to the target cell membrane. Its subcellular location is the target cell. The protein localises to the target cell cytoplasm. Toxic component of a toxin-immunity protein module, which functions as a cellular contact-dependent growth inhibition (CDI) system. CDI modules allow bacteria to communicate with and inhibit the growth of closely related neighboring bacteria in a contact-dependent fashion (target cell counts decrease 100- to 1000-fold). CdiA toxicity is neutralized by its cognate immunity protein CdiI, but not by CdiI from other bacteria. Uses heterotrimeric OmpC and OmpF as target cell outer membrane receptors; receptor function depends on polymorphisms in extracellular loops L4 and L5 of OmpC; interacts with itself and closely related bacteria but also with OmpC from E.cloacae ATCC 13047. Its ability to preferentially bind to 'self' receptors suggests it may also play a role in self-recognition and kin selection. A bamA mutation that decreases its expression about 5-fold is partially resistant to this strain of CdiA, probably due to decreased outer membrane receptor protein assembly. Isolated CdiA-CT is imported in an F-pilus-mediated fashion; CdiA-CT inhibits F-mediated conjugation, probably via its N-terminus (residues 3016-3097), although it is not clear if this is physiologically significant. Gains access to the cytoplasm of target cells by using integral inner membrane protein FtsH. The C-terminal domain (CT) cleaves within tRNA anticodon loops; this activity is inhibited by cognate CdiI. tRNase activity of CdiA-CT is stimulated by CysK, although the extreme C-terminus (residues 3098-3242) has tRNase activity in the absence of CysK. In vivo CDI toxicity requires CysK. CysK stabilizes CdiA-CT, allowing it to bind tRNA substrate; neither CdiA-CT nor CysK bind tRNA alone in vitro. Purified CdiA-CT (residues 3016-3242) inhibits E.coli cell growth when added to cultures alone or in complex with cognate CdiI, growth is inhibited when cognate CdiI is present within the cell but not when a CdiA-CT/CdiI complex is added extracellularly, suggesting CdiA-CT alone but not the CdiA-CT/CdiI complex is imported into the target cell. Functionally, the CdiA protein is thought to be exported from the cell through the central lumen of CdiB, the other half of its two-partner system (TPS). The TPS domain probably remains associated with CdiB while the FHA-1 domain forms an extended filament with the receptor-binding domain (RBD) at its extremity; in the secretion arrested state the C-terminus of the RBD and YP domains form a hairpin-like structure as the FHA-2, PT and CT domains are periplasmic. The YP domain is probably responsible for this arrest at the point where it re-enters the host cell periplasm. Upon binding to a target cell outer membrane receptor (heterotrimeric OmpC-OmpF for this CDI) a signal is transmitted to activate secretion. The filament elongates slightly, the rest of CdiA is secreted and the FHA-2 domain becomes stably associated with the target cell's outer membrane where it facilitates entry of the toxic CT domain into the target cell periplasm. From there the toxic CT domain is cleaved and gains access to the target cell cytoplasm via an inner membrane protein (FtsH for this CDI). This is tRNA nuclease CdiA from Escherichia coli O6:K15:H31 (strain 536 / UPEC).